A 140-amino-acid chain; its full sequence is Putative pre-16S rRNA nuclease (140 aa).

Belongs to the YqgF nuclease family.

It localises to the cytoplasm. In terms of biological role, could be a nuclease involved in processing of the 5'-end of pre-16S rRNA. This is Putative pre-16S rRNA nuclease from Edwardsiella ictaluri (strain 93-146).